The sequence spans 76 residues: DNA-directed RNA polymerase subunit omega (76 aa).

This sequence belongs to the RNA polymerase subunit omega family. In terms of assembly, the RNAP catalytic core consists of 2 alpha, 1 beta, 1 beta' and 1 omega subunit. When a sigma factor is associated with the core the holoenzyme is formed, which can initiate transcription.

The enzyme catalyses RNA(n) + a ribonucleoside 5'-triphosphate = RNA(n+1) + diphosphate. Its function is as follows. Promotes RNA polymerase assembly. Latches the N- and C-terminal regions of the beta' subunit thereby facilitating its interaction with the beta and alpha subunits. This chain is DNA-directed RNA polymerase subunit omega (rpoZ), found in Aquifex aeolicus (strain VF5).